The primary structure comprises 211 residues: Superoxide dismutase [Cu-Zn], chloroplastic (211 aa).

Residues 1–57 (MQAILAAAMAAQTLLFSATAPPASLFQSPSSARPFHSLRLAAGPAGAAAARALVVAD) constitute a chloroplast transit peptide. Residues histidine 103, histidine 105, and histidine 120 each contribute to the Cu cation site. A disulfide bridge connects residues cysteine 114 and cysteine 203. Zn(2+)-binding residues include histidine 120, histidine 128, histidine 137, and aspartate 140. Histidine 177 serves as a coordination point for Cu cation.

This sequence belongs to the Cu-Zn superoxide dismutase family. As to quaternary structure, homotetramer. Cu cation serves as cofactor. The cofactor is Zn(2+).

Its subcellular location is the plastid. It localises to the chloroplast. The catalysed reaction is 2 superoxide + 2 H(+) = H2O2 + O2. Its function is as follows. Destroys radicals which are normally produced within the cells and which are toxic to biological systems. The chain is Superoxide dismutase [Cu-Zn], chloroplastic (SODCP) from Oryza sativa subsp. japonica (Rice).